Reading from the N-terminus, the 248-residue chain is Anamorsin homolog (248 aa).

Residues 4–129 are N-terminal SAM-like domain; sequence FKGLQKSLYI…ETGSSARLSF (126 aa). Residues 130–161 are linker; sequence AKKNASAINVWKISGDDEELIDEEELLDEEDK. Cys-172, Cys-181, Cys-184, and Cys-186 together coordinate [2Fe-2S] cluster. The fe-S binding site A stretch occupies residues 172-186; that stretch reads CSTTGKRKACKNCSC. [4Fe-4S] cluster is bound by residues Cys-209, Cys-212, Cys-220, and Cys-223. Short sequence motifs (cx2C motif) lie at residues 209–212 and 220–223; these read CGNC and CSTC. A fe-S binding site B region spans residues 209-223; sequence CGNCYLGDAFRCSTC.

The protein belongs to the anamorsin family. In terms of assembly, monomer. The cofactor is [2Fe-2S] cluster. It depends on [4Fe-4S] cluster as a cofactor.

The protein localises to the cytoplasm. The protein resides in the mitochondrion intermembrane space. Its function is as follows. Component of the cytosolic iron-sulfur (Fe-S) protein assembly (CIA) machinery. Required for the maturation of extramitochondrial Fe-S proteins. Part of an electron transfer chain functioning in an early step of cytosolic Fe-S biogenesis, facilitating the de novo assembly of a [4Fe-4S] cluster on the cytosolic Fe-S scaffold complex. Electrons are transferred from NADPH via a FAD- and FMN-containing diflavin oxidoreductase. Together with the diflavin oxidoreductase, also required for the assembly of the diferric tyrosyl radical cofactor of ribonucleotide reductase (RNR), probably by providing electrons for reduction during radical cofactor maturation in the catalytic small subunit. The chain is Anamorsin homolog from Drosophila erecta (Fruit fly).